Reading from the N-terminus, the 354-residue chain is Probable cinnamyl alcohol dehydrogenase 5 (354 aa).

Position 43 (Cys-43) interacts with Zn(2+). Ser-45 lines the NADP(+) pocket. Residues His-65, Glu-66, Cys-96, Cys-99, Cys-102, Cys-110, and Cys-159 each contribute to the Zn(2+) site. NADP(+) is bound by residues Thr-163, 184–189 (GLGGLG), 207–212 (SSSPGK), Thr-247, Gly-271, and 294–296 (SCI).

Belongs to the zinc-containing alcohol dehydrogenase family. In terms of assembly, homodimer. Requires Zn(2+) as cofactor.

It catalyses the reaction (E)-cinnamyl alcohol + NADP(+) = (E)-cinnamaldehyde + NADPH + H(+). It carries out the reaction (E)-coniferol + NADP(+) = (E)-coniferaldehyde + NADPH + H(+). The enzyme catalyses (E)-sinapyl alcohol + NADP(+) = (E)-sinapaldehyde + NADPH + H(+). The catalysed reaction is (E)-4-coumaroyl alcohol + NADP(+) = (E)-4-coumaraldehyde + NADPH + H(+). It catalyses the reaction (E)-caffeyl alcohol + NADP(+) = (E)-caffeyl aldehyde + NADPH + H(+). Its pathway is aromatic compound metabolism; phenylpropanoid biosynthesis. Its function is as follows. Involved in lignin biosynthesis. Catalyzes the final step specific for the production of lignin monomers. Catalyzes the NADPH-dependent reduction of coniferaldehyde, 5-hydroxyconiferaldehyde, sinapaldehyde, 4-coumaraldehyde and caffeyl aldehyde to their respective alcohols. The chain is Probable cinnamyl alcohol dehydrogenase 5 from Oryza sativa subsp. japonica (Rice).